We begin with the raw amino-acid sequence, 538 residues long: Chaperonin GroEL (538 aa).

Residues 29–32 (TLGP), 86–90 (DGTTT), G413, 477–479 (NAA), and D493 each bind ATP.

The protein belongs to the chaperonin (HSP60) family. As to quaternary structure, forms a cylinder of 14 subunits composed of two heptameric rings stacked back-to-back. Interacts with the co-chaperonin GroES.

Its subcellular location is the cytoplasm. The catalysed reaction is ATP + H2O + a folded polypeptide = ADP + phosphate + an unfolded polypeptide.. Functionally, together with its co-chaperonin GroES, plays an essential role in assisting protein folding. The GroEL-GroES system forms a nano-cage that allows encapsulation of the non-native substrate proteins and provides a physical environment optimized to promote and accelerate protein folding. The protein is Chaperonin GroEL of Bifidobacterium adolescentis (strain ATCC 15703 / DSM 20083 / NCTC 11814 / E194a).